The primary structure comprises 392 residues: MRRSTHTRRRLLLGGLGLLGLGSLLAWTSLPFGAQPVSTVAVTRADIESSVTALGTLQPRRYVDVGAQASGQIRNLHVEVGDQVHKGQLLVEIDPSTQQAKLDAGRFSIDNLKAQLAEQRAQLKLAQQQLKRQRDLAAVGATREEDLQTAEAQLNVTQARIDMYQAQIRQANASLRSDEAELGYTRIFAPMDGTVVAVDAREGQTLNAQQQTPLILRIAKLSPMTVWAQVSEADIGKIQPGMTAYFTTLAGGKRRWTSTVRQVLPIPPKPLDQTSQGGGSPASATAGATGSQVVQYTVLLDVDNPDGALMAEMTTQVFFVVGQASQVLSAPLAALDDSDNEGLRLAQVFGRDGKVEQRKVRTGLSDRLRVQILDGLSEGDRLVIGAPAASGG.

The tat-type signal signal peptide spans 1-36; sequence MRRSTHTRRRLLLGGLGLLGLGSLLAWTSLPFGAQP. Residues 109 to 181 adopt a coiled-coil conformation; sequence IDNLKAQLAE…NASLRSDEAE (73 aa). The tract at residues 267 to 286 is disordered; the sequence is PPKPLDQTSQGGGSPASATA.

Belongs to the membrane fusion protein (MFP) (TC 8.A.1) family. In terms of assembly, part of the tripartite efflux system PvdRT-OpmQ, which is composed of an inner membrane component with both ATPase and permease domains, PvdT, a periplasmic membrane fusion protein, PvdR, and an outer membrane component, OpmQ. Post-translationally, predicted to be exported by the Tat system. The position of the signal peptide cleavage has not been experimentally proven.

The protein resides in the periplasm. Part of the tripartite efflux system PvdRT-OpmQ required for the secretion into the extracellular milieu of the siderophore pyoverdine (PVD), which is involved in iron acquisition. This subunit is an adapter protein that stimulates the ATPase activity of PvdT and connects the inner and outer membrane components. The system is responsible for export of newly synthesized PVD after the final steps of biosynthesis have taken place in the periplasm. It is also responsible for recycling of PVD after internalization of ferri-PVD into the periplasm by the outer-membrane receptor FpvA and release of iron from PVD, thus making PVD available for new cycles of iron uptake. Contributes to resistance against ampicillin. This chain is Pyoverdine export membrane fusion protein PvdR, found in Pseudomonas putida (strain ATCC 47054 / DSM 6125 / CFBP 8728 / NCIMB 11950 / KT2440).